The sequence spans 217 residues: tRNA (guanine-N(7)-)-methyltransferase (217 aa).

S-adenosyl-L-methionine is bound by residues Glu-44, Glu-69, Asp-96, and Asp-118. Residue Asp-118 is part of the active site. Lys-122 provides a ligand contact to substrate. An interaction with RNA region spans residues 124–129; it reads RHEKRR. Substrate is bound by residues Asp-154 and 191–194; that span reads TEYE.

It belongs to the class I-like SAM-binding methyltransferase superfamily. TrmB family.

The enzyme catalyses guanosine(46) in tRNA + S-adenosyl-L-methionine = N(7)-methylguanosine(46) in tRNA + S-adenosyl-L-homocysteine. Its pathway is tRNA modification; N(7)-methylguanine-tRNA biosynthesis. Functionally, catalyzes the formation of N(7)-methylguanine at position 46 (m7G46) in tRNA. This Bacillus velezensis (strain DSM 23117 / BGSC 10A6 / LMG 26770 / FZB42) (Bacillus amyloliquefaciens subsp. plantarum) protein is tRNA (guanine-N(7)-)-methyltransferase.